Reading from the N-terminus, the 108-residue chain is Transmembrane protein 141 (108 aa).

2 helical membrane-spanning segments follow: residues 32–52 (MKGV…QMFI) and 58–78 (YPLQ…SYGV).

Belongs to the TMEM141 family.

Its subcellular location is the membrane. The protein is Transmembrane protein 141 (TMEM141) of Homo sapiens (Human).